The following is a 63-amino-acid chain: Large ribosomal subunit protein uL30 (63 aa).

Belongs to the universal ribosomal protein uL30 family. As to quaternary structure, part of the 50S ribosomal subunit.

This is Large ribosomal subunit protein uL30 from Rickettsia peacockii (strain Rustic).